Consider the following 452-residue polypeptide: Glutamate--tRNA ligase 2 (452 aa).

The short motif at 8 to 18 (PSPTGRLHVGN) is the 'HIGH' region element. The 'KMSKS' region motif lies at 246–250 (KLSKR). Lysine 249 lines the ATP pocket.

The protein belongs to the class-I aminoacyl-tRNA synthetase family. Glutamate--tRNA ligase type 1 subfamily. Monomer.

The protein localises to the cytoplasm. It catalyses the reaction tRNA(Glu) + L-glutamate + ATP = L-glutamyl-tRNA(Glu) + AMP + diphosphate. In terms of biological role, catalyzes the attachment of glutamate to tRNA(Glu) in a two-step reaction: glutamate is first activated by ATP to form Glu-AMP and then transferred to the acceptor end of tRNA(Glu). This is Glutamate--tRNA ligase 2 from Erythrobacter litoralis (strain HTCC2594).